We begin with the raw amino-acid sequence, 316 residues long: Olfactory receptor 10H3 (316 aa).

Residues 1–25 (MPGQNYRTISEFILSGFSAFPQQLL) are Extracellular-facing. The helical transmembrane segment at 26–46 (PVLFLLYLLMFLFTLLGNLLI) threads the bilayer. Topologically, residues 47–54 (MATVWIER) are cytoplasmic. Residues 55-75 (RLHTPMYLFLCALSISEILFT) traverse the membrane as a helical segment. Residues 76–99 (VAITPRMLADLLFTHRSITFVACA) lie on the Extracellular side of the membrane. Cys98 and Cys190 are joined by a disulfide. The helical transmembrane segment at 100–120 (IQMFFSFMFGFTHSFLLMVMG) threads the bilayer. The Cytoplasmic segment spans residues 121–139 (YDHYVTICHPLHYNMLMSP). The chain crosses the membrane as a helical span at residues 140–160 (RGCAHLVAWTWAGGSVMGMMV). Residues 161–197 (TMMVFHLTFCGSNVIHHFLCHVLSLLKLACGSKTSSV) lie on the Extracellular side of the membrane. Residues 198 to 218 (IMGVMLVCVTALIGCLFLIIL) form a helical membrane-spanning segment. Residues 219–238 (SFVFIVAAILRIPSAEGRHK) are Cytoplasmic-facing. The chain crosses the membrane as a helical span at residues 239–259 (TFSTCVSHLTVVVMHYSFASL). The Extracellular segment spans residues 260–272 (IYLKPKGLHSMYS). Residues 273–293 (DALMATTYTVFTPFLSPIIFS) form a helical membrane-spanning segment. Residues 294 to 316 (LRNKELKNAINKNFCRRFCPLSS) lie on the Cytoplasmic side of the membrane.

Belongs to the G-protein coupled receptor 1 family.

It is found in the cell membrane. Odorant receptor. The protein is Olfactory receptor 10H3 (OR10H3) of Homo sapiens (Human).